The following is a 563-amino-acid chain: Arginine--tRNA ligase (563 aa).

The 'HIGH' region signature appears at 121–131 (PNIAKPFSIGH).

This sequence belongs to the class-I aminoacyl-tRNA synthetase family. Monomer.

Its subcellular location is the cytoplasm. The enzyme catalyses tRNA(Arg) + L-arginine + ATP = L-arginyl-tRNA(Arg) + AMP + diphosphate. The protein is Arginine--tRNA ligase of Streptococcus equi subsp. equi (strain 4047).